Here is a 506-residue protein sequence, read N- to C-terminus: Bifunctional purine biosynthesis protein PurH (506 aa).

In terms of domain architecture, MGS-like spans 1 to 146; the sequence is MARLALLSVS…KNFAHLTVLC (146 aa).

The protein belongs to the PurH family.

The enzyme catalyses (6R)-10-formyltetrahydrofolate + 5-amino-1-(5-phospho-beta-D-ribosyl)imidazole-4-carboxamide = 5-formamido-1-(5-phospho-D-ribosyl)imidazole-4-carboxamide + (6S)-5,6,7,8-tetrahydrofolate. The catalysed reaction is IMP + H2O = 5-formamido-1-(5-phospho-D-ribosyl)imidazole-4-carboxamide. Its pathway is purine metabolism; IMP biosynthesis via de novo pathway; 5-formamido-1-(5-phospho-D-ribosyl)imidazole-4-carboxamide from 5-amino-1-(5-phospho-D-ribosyl)imidazole-4-carboxamide (10-formyl THF route): step 1/1. The protein operates within purine metabolism; IMP biosynthesis via de novo pathway; IMP from 5-formamido-1-(5-phospho-D-ribosyl)imidazole-4-carboxamide: step 1/1. The sequence is that of Bifunctional purine biosynthesis protein PurH from Trichormus variabilis (strain ATCC 29413 / PCC 7937) (Anabaena variabilis).